Reading from the N-terminus, the 373-residue chain is Probable neutral protease 2 homolog MCYG_05201 (373 aa).

The first 19 residues, 1–19 (MQFFTALAAVGALVAPALA), serve as a signal peptide directing secretion. Positions 20-187 (LPTQVPANQS…AHIVGTIDKR (168 aa)) are excised as a propeptide. Disulfide bonds link Cys195–Cys265 and Cys272–Cys290. His314 contacts Zn(2+). Glu315 is an active-site residue. Residues His318 and Asp329 each coordinate Zn(2+).

The protein belongs to the peptidase M35 family. Zn(2+) is required as a cofactor.

Its subcellular location is the secreted. The enzyme catalyses Preferential cleavage of bonds with hydrophobic residues in P1'. Also 3-Asn-|-Gln-4 and 8-Gly-|-Ser-9 bonds in insulin B chain.. In terms of biological role, probable secreted metalloprotease that shows high activities on basic nuclear substrates such as histone and protamine. May be involved in virulence. This Arthroderma otae (strain ATCC MYA-4605 / CBS 113480) (Microsporum canis) protein is Probable neutral protease 2 homolog MCYG_05201.